We begin with the raw amino-acid sequence, 145 residues long: LIM domain only protein 3 (145 aa).

LIM zinc-binding domains are found at residues lysine 11–valine 73 and glycine 75–lysine 137.

In Bos taurus (Bovine), this protein is LIM domain only protein 3 (LMO3).